A 306-amino-acid chain; its full sequence is Methionyl-tRNA formyltransferase (306 aa).

108–111 (SLLP) provides a ligand contact to (6S)-5,6,7,8-tetrahydrofolate.

The protein belongs to the Fmt family.

It carries out the reaction L-methionyl-tRNA(fMet) + (6R)-10-formyltetrahydrofolate = N-formyl-L-methionyl-tRNA(fMet) + (6S)-5,6,7,8-tetrahydrofolate + H(+). Its function is as follows. Attaches a formyl group to the free amino group of methionyl-tRNA(fMet). The formyl group appears to play a dual role in the initiator identity of N-formylmethionyl-tRNA by promoting its recognition by IF2 and preventing the misappropriation of this tRNA by the elongation apparatus. The sequence is that of Methionyl-tRNA formyltransferase from Paenarthrobacter aurescens (strain TC1).